We begin with the raw amino-acid sequence, 874 residues long: Alanine--tRNA ligase (874 aa).

Zn(2+) is bound by residues His562, His566, Cys664, and His668.

The protein belongs to the class-II aminoacyl-tRNA synthetase family. Zn(2+) is required as a cofactor.

The protein resides in the cytoplasm. It catalyses the reaction tRNA(Ala) + L-alanine + ATP = L-alanyl-tRNA(Ala) + AMP + diphosphate. Functionally, catalyzes the attachment of alanine to tRNA(Ala) in a two-step reaction: alanine is first activated by ATP to form Ala-AMP and then transferred to the acceptor end of tRNA(Ala). Also edits incorrectly charged Ser-tRNA(Ala) and Gly-tRNA(Ala) via its editing domain. This Shewanella oneidensis (strain ATCC 700550 / JCM 31522 / CIP 106686 / LMG 19005 / NCIMB 14063 / MR-1) protein is Alanine--tRNA ligase.